A 568-amino-acid polypeptide reads, in one-letter code: Sphingosine-1-phosphate lyase 1 (568 aa).

Residues 1–41 (MPSTDLLTLKAFEPYLEILEVYSTKAKNYVNGHCTKYEPWQ) are Lumenal-facing. The helical; Signal-anchor for type III membrane protein transmembrane segment at 42–62 (LIAWSVVWTLLIVWGYEFVFQ) threads the bilayer. Residues 63 to 568 (PESLWSRFKK…SQMNGSPKPH (506 aa)) are Cytoplasmic-facing. At Lys353 the chain carries N6-(pyridoxal phosphate)lysine; alternate. At Lys353 the chain carries N6-acetyllysine; alternate. Tyr356 and Tyr366 each carry 3'-nitrotyrosine. Position 564 is a phosphoserine (Ser564).

The protein belongs to the group II decarboxylase family. Sphingosine-1-phosphate lyase subfamily. In terms of assembly, homodimer. The cofactor is pyridoxal 5'-phosphate.

It localises to the endoplasmic reticulum membrane. It catalyses the reaction sphinganine 1-phosphate = hexadecanal + phosphoethanolamine. It carries out the reaction sphing-4-enine 1-phosphate = (2E)-hexadecenal + phosphoethanolamine. It functions in the pathway lipid metabolism; sphingolipid metabolism. Its function is as follows. Cleaves phosphorylated sphingoid bases (PSBs), such as sphingosine-1-phosphate, into fatty aldehydes and phosphoethanolamine. Elevates stress-induced ceramide production and apoptosis. Required for global lipid homeostasis in liver and cholesterol homeostasis in fibroblasts. Involved in the regulation of pro-inflammatory response and neutrophil trafficking. Modulates neuronal autophagy via phosphoethanolamine production which regulates accumulation of aggregate-prone proteins such as APP. Seems to play a role in establishing neuronal contact sites and axonal maintenance. This is Sphingosine-1-phosphate lyase 1 from Pongo abelii (Sumatran orangutan).